A 179-amino-acid polypeptide reads, in one-letter code: Large ribosomal subunit protein uL6 (179 aa).

This sequence belongs to the universal ribosomal protein uL6 family. In terms of assembly, part of the 50S ribosomal subunit.

This protein binds to the 23S rRNA, and is important in its secondary structure. It is located near the subunit interface in the base of the L7/L12 stalk, and near the tRNA binding site of the peptidyltransferase center. The protein is Large ribosomal subunit protein uL6 of Geobacter metallireducens (strain ATCC 53774 / DSM 7210 / GS-15).